Here is a 346-residue protein sequence, read N- to C-terminus: 3 beta-hydroxysteroid dehydrogenase/Delta 5--&gt;4-isomerase (346 aa).

The active-site Proton acceptor is the Y147. K151 contacts NAD(+).

The protein belongs to the 3-beta-HSD family.

The catalysed reaction is a 3beta-hydroxy-Delta(5)-steroid + NAD(+) = a 3-oxo-Delta(5)-steroid + NADH + H(+). It carries out the reaction a 3-oxo-Delta(5)-steroid = a 3-oxo-Delta(4)-steroid. The protein operates within lipid metabolism; steroid biosynthesis. Functionally, catalyzes the oxidative conversion of Delta(5)-ene-3-beta-hydroxy steroid, and the oxidative conversion of ketosteroids. The 3-beta-HSD enzymatic system plays a crucial role in the biosynthesis of all classes of hormonal steroids. During viral infection, steroid production contributes to virulence by inhibiting the host inflammatory response. The sequence is that of 3 beta-hydroxysteroid dehydrogenase/Delta 5--&gt;4-isomerase (OPG174) from Monkeypox virus.